Consider the following 29-residue polypeptide: GLPICGETCFTGKCYTPGCTCSYPICKKN.

A cross-link (cyclopeptide (Gly-Asn)) is located at residues 1 to 29 (GLPICGETCFTGKCYTPGCTCSYPICKKN). Cystine bridges form between cysteine 5–cysteine 19, cysteine 9–cysteine 21, and cysteine 14–cysteine 26.

It belongs to the cyclotide family. Moebius subfamily. In terms of processing, this is a cyclic peptide.

In terms of biological role, probably participates in a plant defense mechanism. The sequence is that of Cyclotide mden-B from Melicytus dentatus (Tree violet).